The sequence spans 422 residues: Serine protease HTRA2, mitochondrial (422 aa).

A mitochondrion-targeting transit peptide spans 1 to 17 (MALRGSHRLEVIFKRCI). Residues 18 to 74 (ASPVFHSHAANRRSSQLAIKGTDPSSNGNSGQDQQNGEQKAKGWRRLVRFFVPFSLG) constitute a propeptide that is removed on maturation. The span at 29–55 (RRSSQLAIKGTDPSSNGNSGQDQQNGE) shows a compositional bias: polar residues. Positions 29–56 (RRSSQLAIKGTDPSSNGNSGQDQQNGEQ) are disordered. A helical membrane pass occupies residues 64–82 (LVRFFVPFSLGAAVSAAVI). Short sequence motifs (IAP-binding) lie at residues 75–78 (AAVS) and 94–97 (SKMT). Positions 139 to 302 (SNGSGFIIEQ…IPIDYVKVFL (164 aa)) are serine protease. Residues histidine 157, aspartate 189, and serine 266 each act as charge relay system in the active site. The PDZ domain maps to 325-410 (MGITMLTLTP…NLDIVILRGV (86 aa)).

It belongs to the peptidase S1C family. In terms of assembly, interacts with th/DIAP1 (via BIR 2 domain).

Its subcellular location is the mitochondrion intermembrane space. The protein resides in the mitochondrion membrane. It catalyses the reaction Cleavage of non-polar aliphatic amino-acids at the P1 position, with a preference for Val, Ile and Met. At the P2 and P3 positions, Arg is selected most strongly with a secondary preference for other hydrophilic residues.. Serine protease that shows proteolytic activity against a non-specific substrate beta-casein. Promotes or induces cell death either by direct binding to and inhibition of BIRC proteins (also called inhibitor of apoptosis proteins, IAPs), leading to an increase in caspase activity, or by a BIRC inhibition-independent, caspase-independent and serine protease activity-dependent mechanism. Can antagonize antiapoptotic activity of th/Diap1 by directly inducing the degradation of th/Diap1. The chain is Serine protease HTRA2, mitochondrial from Drosophila yakuba (Fruit fly).